The sequence spans 131 residues: UPF0102 protein YraN (131 aa).

The interval 1 to 20 (MATVPTRSGSPRQLTTKQTG) is disordered.

It belongs to the UPF0102 family.

This is UPF0102 protein YraN from Escherichia coli O139:H28 (strain E24377A / ETEC).